Consider the following 474-residue polypeptide: P2X purinoceptor 2 (474 aa).

At 1 to 42 (MAATHPKAPTAQRLRQGWSAFWDYETPKVIVVRNRPLGVVYR) the chain is on the cytoplasmic side. The chain crosses the membrane as a helical span at residues 43-60 (AVQLLILLYFVWYVFIVQ). The Extracellular portion of the chain corresponds to 61 to 333 (KSYQDSETGP…IVHGQAGKFS (273 aa)). Residues K77 and K79 each coordinate ATP. 3 disulfide bridges follow: C121–C172, C132–C155, and C138–C166. N129 carries an N-linked (GlcNAc...) asparagine glycan. N190 carries an N-linked (GlcNAc...) asparagine glycan. T192 serves as a coordination point for ATP. C222 and C232 form a disulfide bridge. N247 carries N-linked (GlcNAc...) asparagine glycosylation. A disulfide bridge links C266 with C275. S292, N296, and R298 together coordinate ATP. A glycan (N-linked (GlcNAc...) asparagine) is linked at N306. K315 contributes to the ATP binding site. The segment at 316-329 (AYGIRIDVIVHGQA) is pore-forming motif. A helical membrane pass occupies residues 334–354 (LIPTIINLATALTSIGVGSFL). Residues 355–474 (CDWILLTFMN…PTDPKGLAQL (120 aa)) lie on the Cytoplasmic side of the membrane. The segment at 445-474 (PDRCVGQGLPSSESPLQDSTPTDPKGLAQL) is disordered. Residues 453–466 (LPSSESPLQDSTPT) show a composition bias toward polar residues.

The protein belongs to the P2X receptor family. As to quaternary structure, homotrimer and heterotrimer; functional P2XRs are organized as homomeric and heteromeric trimers. Homotrimer. Forms heterodimer with P2RX1. Forms heterotrimer with P2RX6. Forms heterotrimer with P2RX3. In terms of tissue distribution, express in organ of Corti.

The protein resides in the cell membrane. It carries out the reaction Ca(2+)(in) = Ca(2+)(out). It catalyses the reaction K(+)(in) = K(+)(out). The enzyme catalyses Na(+)(in) = Na(+)(out). With respect to regulation, fast activation by external ATP. Exhibits slow desensitization during prolonged ATP activation. Not sensitive to the ATP agonist:alpha/beta-methylene-ATP. In terms of biological role, ATP-gated nonselective transmembrane cation channel permeable to potassium, sodium and calcium. Activation by extracellular ATP induces a variety of cellular responses, such as excitatory postsynaptic responses in sensory neurons, neuromuscular junctions (NMJ) formation, hearing, perception of taste and peristalsis. In the inner ear, regulates sound transduction and auditory neurotransmission, outer hair cell electromotility, inner ear gap junctions, and K(+) recycling. Mediates synaptic transmission between neurons and from neurons to smooth muscle. The protein is P2X purinoceptor 2 (P2RX2) of Cavia porcellus (Guinea pig).